The chain runs to 169 residues: Probable GPI-anchored adhesin-like protein PGA22 (169 aa).

The N-terminal stretch at 1–18 (MKYSTLAWLVIASYTVFA) is a signal peptide. N-linked (GlcNAc...) asparagine glycosylation is found at Asn87, Asn104, Asn111, and Asn118. The GPI-anchor amidated glycine moiety is linked to residue Gly140. Positions 141–169 (PALTTTTVAEAFSLAAGASLGYLVALLFL) are cleaved as a propeptide — removed in mature form.

Its subcellular location is the cell membrane. Putative adhesin which may be involved in cell adhesion and virulence. The protein is Probable GPI-anchored adhesin-like protein PGA22 (PGA22) of Candida albicans (strain SC5314 / ATCC MYA-2876) (Yeast).